The chain runs to 345 residues: S-adenosylmethionine:tRNA ribosyltransferase-isomerase (345 aa).

It belongs to the QueA family. In terms of assembly, monomer.

It localises to the cytoplasm. It catalyses the reaction 7-aminomethyl-7-carbaguanosine(34) in tRNA + S-adenosyl-L-methionine = epoxyqueuosine(34) in tRNA + adenine + L-methionine + 2 H(+). It participates in tRNA modification; tRNA-queuosine biosynthesis. In terms of biological role, transfers and isomerizes the ribose moiety from AdoMet to the 7-aminomethyl group of 7-deazaguanine (preQ1-tRNA) to give epoxyqueuosine (oQ-tRNA). The protein is S-adenosylmethionine:tRNA ribosyltransferase-isomerase of Azoarcus sp. (strain BH72).